The chain runs to 566 residues: Arginine--tRNA ligase (566 aa).

A 'HIGH' region motif is present at residues 120 to 130; that stretch reads PNIAKPFHVGH.

This sequence belongs to the class-I aminoacyl-tRNA synthetase family. Monomer.

It is found in the cytoplasm. It catalyses the reaction tRNA(Arg) + L-arginine + ATP = L-arginyl-tRNA(Arg) + AMP + diphosphate. The chain is Arginine--tRNA ligase from Clostridium kluyveri (strain NBRC 12016).